We begin with the raw amino-acid sequence, 391 residues long: DNA/RNA-binding protein KIN17 (391 aa).

The segment at 28 to 50 (CQMCQKQCRDENGFKCHCMSESH) adopts a C2H2-type zinc-finger fold. Residues 51-160 (QRQLLLASEN…RQLELEKKKK (110 aa)) are winged helix-turn-helix (wHTH). Lys-135 carries the N6,N6,N6-trimethyllysine; by METTL22; alternate modification. N6-methyllysine; alternate is present on Lys-135. Coiled coils occupy residues 147–180 (ETIR…VRRG) and 252–275 (AKKK…TART). Positions 206 to 258 (NLNKGAGGSAGATTSKSSSLGPSALKLLGSAASGKRKESSQSSAQPAKKKKSA) are disordered. The interval 282-332 (GIVVKIITKKLGEKYHKKKGVVKEVIDRYTAVVKMTDSGDRLKLDQTHLET) is C-terminal subdomain A. The segment at 338-389 (GKRVLVLNGGYRGNEGTLESINEKAFSATIVIETGPLKGRRVEGIQYEDISK) is C-terminal subdomain B.

This sequence belongs to the KIN17 family. Associated with DNA polymerase alpha, RFC1 and cyclin A, in multiprotein DNA replication complexes. Also associates with replication origins at the G1/S phase boundary and throughout the S phase in vivo. In terms of tissue distribution, highly expressed in transformed mouse AtT20 neuroendocrine cells. Expressed at a lower level in testis, kidney, skeletal muscle, liver, lung, spleen, brain and heart and kidney. In testis, expressed at much higher levels in proliferating cells than in differentiating cells. Not detected in embryo.

It localises to the nucleus. The protein resides in the cytoplasm. Its function is as follows. Involved in DNA replication and the cellular response to DNA damage. May participate in DNA replication factories and create a bridge between DNA replication and repair mediated by high molecular weight complexes. May play a role in illegitimate recombination and regulation of gene expression. May participate in mRNA processing. Binds, in vitro, to double-stranded DNA. Also shown to bind preferentially to curved DNA in vitro and in vivo. Binds via its C-terminal domain to RNA in vitro. In Mus musculus (Mouse), this protein is DNA/RNA-binding protein KIN17.